The chain runs to 269 residues: 3-methyl-2-oxobutanoate hydroxymethyltransferase (269 aa).

Positions 43 and 82 each coordinate Mg(2+). Residues 43 to 44 (DS), aspartate 82, and lysine 110 each bind 3-methyl-2-oxobutanoate. Glutamate 112 is a binding site for Mg(2+). Catalysis depends on glutamate 179, which acts as the Proton acceptor.

Belongs to the PanB family. As to quaternary structure, homodecamer; pentamer of dimers. Mg(2+) serves as cofactor.

The protein localises to the cytoplasm. The enzyme catalyses 3-methyl-2-oxobutanoate + (6R)-5,10-methylene-5,6,7,8-tetrahydrofolate + H2O = 2-dehydropantoate + (6S)-5,6,7,8-tetrahydrofolate. It functions in the pathway cofactor biosynthesis; (R)-pantothenate biosynthesis; (R)-pantoate from 3-methyl-2-oxobutanoate: step 1/2. Functionally, catalyzes the reversible reaction in which hydroxymethyl group from 5,10-methylenetetrahydrofolate is transferred onto alpha-ketoisovalerate to form ketopantoate. This Acinetobacter baylyi (strain ATCC 33305 / BD413 / ADP1) protein is 3-methyl-2-oxobutanoate hydroxymethyltransferase.